A 248-amino-acid chain; its full sequence is Triosephosphate isomerase (248 aa).

Substrate contacts are provided by N10 and K12. The Electrophile role is filled by H95. Residue E165 is the Proton acceptor of the active site.

This sequence belongs to the triosephosphate isomerase family. In terms of assembly, homodimer.

The enzyme catalyses D-glyceraldehyde 3-phosphate = dihydroxyacetone phosphate. Its pathway is carbohydrate biosynthesis; gluconeogenesis. The protein operates within carbohydrate degradation; glycolysis; D-glyceraldehyde 3-phosphate from glycerone phosphate: step 1/1. The sequence is that of Triosephosphate isomerase (TPI1) from Kluyveromyces marxianus (Yeast).